Here is a 390-residue protein sequence, read N- to C-terminus: Phosphopentomutase (390 aa).

Positions 11, 283, 288, 324, 325, and 336 each coordinate Mn(2+).

Belongs to the phosphopentomutase family. Mn(2+) is required as a cofactor.

It is found in the cytoplasm. It carries out the reaction 2-deoxy-alpha-D-ribose 1-phosphate = 2-deoxy-D-ribose 5-phosphate. The catalysed reaction is alpha-D-ribose 1-phosphate = D-ribose 5-phosphate. Its pathway is carbohydrate degradation; 2-deoxy-D-ribose 1-phosphate degradation; D-glyceraldehyde 3-phosphate and acetaldehyde from 2-deoxy-alpha-D-ribose 1-phosphate: step 1/2. Isomerase that catalyzes the conversion of deoxy-ribose 1-phosphate (dRib-1-P) and ribose 1-phosphate (Rib-1-P) to deoxy-ribose 5-phosphate (dRib-5-P) and ribose 5-phosphate (Rib-5-P), respectively. This chain is Phosphopentomutase, found in Clostridium acetobutylicum (strain ATCC 824 / DSM 792 / JCM 1419 / IAM 19013 / LMG 5710 / NBRC 13948 / NRRL B-527 / VKM B-1787 / 2291 / W).